A 224-amino-acid chain; its full sequence is Polyadenylate-binding protein 2 (224 aa).

The segment covering 1–36 (MADEDITLNEDQLLESLEETNGEQETEIATEVEEEG) has biased composition (acidic residues). Residues 1–40 (MADEDITLNEDQLLESLEETNGEQETEIATEVEEEGSMQI) form a disordered region. Residues 9–74 (NEDQLLESLE…QSEVDKQMAG (66 aa)) are a coiled coil. The RRM domain maps to 96-173 (RSVYVGNVDY…RQIKVMSKRT (78 aa)).

As to quaternary structure, interacts with ZC3H3. In terms of tissue distribution, expressed ubiquitously in all transcriptionally active cells.

It localises to the nucleus. The protein localises to the cytoplasm. Functionally, involved in the 3'-end formation of mRNA precursors (pre-mRNA) by the addition of a poly(A) tail of 200-250 nt to the upstream cleavage product. Stimulates poly(A) polymerase (PAPOLA) conferring processivity on the poly(A) tail elongation reaction and also controls the poly(A) tail length. Increases the affinity of poly(A) polymerase for RNA. Binds to poly(A) and to poly(G) with high affinity. May protect the poly(A) tail from degradation. Plays a role in the positive regulation of alpha-1,3 fucosylation, possibly by cooperating with swm which regulates nuclear export of fucosyltransferase FucTA. Involved in germline stem cell transit amplification, differentiation and mitosis-to-meiosis transition. The chain is Polyadenylate-binding protein 2 from Drosophila melanogaster (Fruit fly).